The primary structure comprises 526 residues: Outer capsid protein VP5 (526 aa).

Residues 1 to 42 form an involved in membrane permeabilization region; the sequence is MGKVIRSLNRFGKKVGNALTSNTAKKIYSTIGKAADEFLESE.

It belongs to the orbivirus VP5 family.

Its subcellular location is the virion. Its function is as follows. VP5 protein is one of the two proteins (with VP2) which constitute the virus particle outer capsid. Acts as a membrane permeabilization protein that mediates release of viral particles from endosomal compartments into the cytoplasm. Permeabilization activity is probably negatively regulated by VP2 and is triggered by endosomal degradation of VP2 and exposure to low pH. This chain is Outer capsid protein VP5 (Segment-6), found in Bluetongue virus 1 (isolate South Africa) (BTV 1).